The following is a 549-amino-acid chain: Glucose-6-phosphate isomerase (549 aa).

The active-site Proton donor is E353. Residues H384 and K513 contribute to the active site.

Belongs to the GPI family.

The protein resides in the cytoplasm. It carries out the reaction alpha-D-glucose 6-phosphate = beta-D-fructose 6-phosphate. The protein operates within carbohydrate biosynthesis; gluconeogenesis. It participates in carbohydrate degradation; glycolysis; D-glyceraldehyde 3-phosphate and glycerone phosphate from D-glucose: step 2/4. Its function is as follows. Catalyzes the reversible isomerization of glucose-6-phosphate to fructose-6-phosphate. This Brucella suis (strain ATCC 23445 / NCTC 10510) protein is Glucose-6-phosphate isomerase.